The chain runs to 659 residues: RNA polymerase II subunit A C-terminal domain phosphatase (659 aa).

One can recognise an FCP1 homology domain in the interval 139-303 (ITNRKLVLLV…KNSKEQMPVQ (165 aa)). The BRCT domain maps to 351–443 (ERHKVLDGCV…LKADENLFQL (93 aa)). Over residues 484-504 (ALSDDEDDGDNEDEDDDGNDV) the composition is skewed to acidic residues. The tract at residues 484 to 640 (ALSDDEDDGD…PESDDDDEFE (157 aa)) is disordered. Positions 505–519 (GEDKGDENLEEKQEK) are enriched in basic and acidic residues. Positions 529-538 (QNGSVENQSG) are enriched in polar residues. 3 stretches are compositionally biased toward acidic residues: residues 560–576 (MEDEEEESDSDNEDDDT), 596–607 (ENEDDAVFDVDD), and 616–640 (IDEEEDDEDNEDEEVPESDDDDEFE).

It is found in the nucleus. It catalyses the reaction O-phospho-L-seryl-[protein] + H2O = L-seryl-[protein] + phosphate. The enzyme catalyses O-phospho-L-threonyl-[protein] + H2O = L-threonyl-[protein] + phosphate. In terms of biological role, during the late stages of oogenesis, dephosphorylates 'Ser-5' of the heptad repeats YSPTSPS in the C-terminal domain of the largest RNA polymerase II subunit ama-1. Similarly, dephosphorylates 'Ser-5' of ama-1 in early embryonic cells prior to the activation of the zygotic transcription program at the 4-cell embryonic stage. May dephosphorylate 'Ser-2' of the ama-1 heptad repeats YSPTSPS in embryonic somatic and germline cells. The protein is RNA polymerase II subunit A C-terminal domain phosphatase of Caenorhabditis elegans.